A 422-amino-acid polypeptide reads, in one-letter code: Serine--tRNA ligase (422 aa).

231-233 (TAE) provides a ligand contact to L-serine. 261 to 263 (RSE) lines the ATP pocket. L-serine is bound at residue E284. 348–351 (EISS) lines the ATP pocket. S383 provides a ligand contact to L-serine.

The protein belongs to the class-II aminoacyl-tRNA synthetase family. Type-1 seryl-tRNA synthetase subfamily. In terms of assembly, homodimer. The tRNA molecule binds across the dimer.

It is found in the cytoplasm. It carries out the reaction tRNA(Ser) + L-serine + ATP = L-seryl-tRNA(Ser) + AMP + diphosphate + H(+). It catalyses the reaction tRNA(Sec) + L-serine + ATP = L-seryl-tRNA(Sec) + AMP + diphosphate + H(+). It functions in the pathway aminoacyl-tRNA biosynthesis; selenocysteinyl-tRNA(Sec) biosynthesis; L-seryl-tRNA(Sec) from L-serine and tRNA(Sec): step 1/1. Its function is as follows. Catalyzes the attachment of serine to tRNA(Ser). Is also able to aminoacylate tRNA(Sec) with serine, to form the misacylated tRNA L-seryl-tRNA(Sec), which will be further converted into selenocysteinyl-tRNA(Sec). This is Serine--tRNA ligase from Mycoplasmopsis agalactiae (strain NCTC 10123 / CIP 59.7 / PG2) (Mycoplasma agalactiae).